Here is a 679-residue protein sequence, read N- to C-terminus: tRNA uridine 5-carboxymethylaminomethyl modification enzyme MnmG (679 aa).

13–18 (GGGHAG) provides a ligand contact to FAD. 280-294 (GPRYCPSVEDKINRF) contacts NAD(+).

The protein belongs to the MnmG family. Homodimer. Heterotetramer of two MnmE and two MnmG subunits. The cofactor is FAD.

The protein resides in the cytoplasm. NAD-binding protein involved in the addition of a carboxymethylaminomethyl (cmnm) group at the wobble position (U34) of certain tRNAs, forming tRNA-cmnm(5)s(2)U34. This is tRNA uridine 5-carboxymethylaminomethyl modification enzyme MnmG from Albidiferax ferrireducens (strain ATCC BAA-621 / DSM 15236 / T118) (Rhodoferax ferrireducens).